Consider the following 750-residue polypeptide: Meiosis protein mei2 (750 aa).

A disordered region spans residues 1–20 (MIMETESPLSITSPSPSDST). The segment covering 7-20 (SPLSITSPSPSDST) has biased composition (polar residues). RRM domains lie at 195 to 270 (RYLF…FCQR) and 293 to 361 (LLLN…CLQV).

As to quaternary structure, binds rad24 when phosphorylated. In terms of processing, inactivated by phosphorylation by ran1/pat1.

Crucial for commitment to meiosis but it is not sufficient itself for the commitment. May be a splicing regulator. The chain is Meiosis protein mei2 (mei2) from Schizosaccharomyces pombe (strain 972 / ATCC 24843) (Fission yeast).